Consider the following 243-residue polypeptide: Small ribosomal subunit protein eS4 (243 aa).

The S4 RNA-binding domain maps to 43–105 (IPLLYIVRDY…TGEHYRVLPN (63 aa)).

The protein belongs to the eukaryotic ribosomal protein eS4 family. Part of the 30S ribosomal subunit.

The chain is Small ribosomal subunit protein eS4 from Pyrococcus furiosus (strain ATCC 43587 / DSM 3638 / JCM 8422 / Vc1).